The chain runs to 65 residues: Large ribosomal subunit protein bL33c (65 aa).

The protein belongs to the bacterial ribosomal protein bL33 family.

The protein localises to the plastid. The polypeptide is Large ribosomal subunit protein bL33c (Aneura mirabilis (Parasitic liverwort)).